The following is a 119-amino-acid chain: Ribonuclease P protein component (119 aa).

The protein belongs to the RnpA family. In terms of assembly, consists of a catalytic RNA component (M1 or rnpB) and a protein subunit.

It carries out the reaction Endonucleolytic cleavage of RNA, removing 5'-extranucleotides from tRNA precursor.. Its function is as follows. RNaseP catalyzes the removal of the 5'-leader sequence from pre-tRNA to produce the mature 5'-terminus. It can also cleave other RNA substrates such as 4.5S RNA. The protein component plays an auxiliary but essential role in vivo by binding to the 5'-leader sequence and broadening the substrate specificity of the ribozyme. In Bifidobacterium longum (strain DJO10A), this protein is Ribonuclease P protein component.